A 299-amino-acid polypeptide reads, in one-letter code: Superkiller complex protein 8 (299 aa).

WD repeat units follow at residues 11 to 48 (AHED…FLTE), 54 to 93 (KHIL…LHKT), 96 to 135 (SGPL…KLRS), 138 to 177 (NTNK…RVSE), 180 to 219 (AHGV…PYIA), 223 to 263 (GHSS…LDSS), and 266 to 299 (AHAD…ALKQ).

Belongs to the SKI8 family.

The chain is Superkiller complex protein 8 (skic8) from Dictyostelium discoideum (Social amoeba).